The sequence spans 595 residues: NADPH-dependent diflavin oxidoreductase 1 (595 aa).

The 145-residue stretch at 6 to 150 (VLVLYGSQTG…VIDPWLLSFW (145 aa)) folds into the Flavodoxin-like domain. Residues 12–17 (SQTGTA), 59–62 (ATTG), 97–106 (LGDSSYPKFN), and Asp132 contribute to the FMN site. The 241-residue stretch at 204 to 444 (LRPFPAPLVF…WVKKGSLKFP (241 aa)) folds into the FAD-binding FR-type domain. FAD contacts are provided by residues Arg348, 380 to 383 (RSFS), and 414 to 417 (GLCS). NADP(+)-binding positions include Thr458, 513-514 (SR), and 519-523 (KVYVQ). Trp594 provides a ligand contact to FAD.

The protein belongs to the NADPH-dependent diflavin oxidoreductase NDOR1 family. This sequence in the N-terminal section; belongs to the flavodoxin family. It in the C-terminal section; belongs to the flavoprotein pyridine nucleotide cytochrome reductase family. Interacts with ciapin1; as part of the cytosolic iron-sulfur (Fe-S) protein assembly (CIA) machinery. FAD is required as a cofactor. The cofactor is FMN.

It localises to the cytoplasm. Its subcellular location is the perinuclear region. It catalyses the reaction 2 oxidized [2Fe-2S]-[protein] + NADPH = 2 reduced [2Fe-2S]-[protein] + NADP(+) + H(+). NADPH-dependent reductase which is a central component of the cytosolic iron-sulfur (Fe-S) protein assembly (CIA) machinery. Transfers electrons from NADPH via its FAD and FMN prosthetic groups to the [2Fe-2S] cluster of ciapin1, another key component of the CIA machinery. In turn, this reduced cluster provides electrons for assembly of cytosolic iron-sulfur cluster proteins. It can also reduce the [2Fe-2S] cluster of cisd1 and activate this protein implicated in Fe/S cluster repair. The chain is NADPH-dependent diflavin oxidoreductase 1 from Danio rerio (Zebrafish).